A 204-amino-acid chain; its full sequence is N-(5'-phosphoribosyl)anthranilate isomerase (204 aa).

Belongs to the TrpF family.

The catalysed reaction is N-(5-phospho-beta-D-ribosyl)anthranilate = 1-(2-carboxyphenylamino)-1-deoxy-D-ribulose 5-phosphate. Its pathway is amino-acid biosynthesis; L-tryptophan biosynthesis; L-tryptophan from chorismate: step 3/5. The chain is N-(5'-phosphoribosyl)anthranilate isomerase from Desulforudis audaxviator (strain MP104C).